Consider the following 476-residue polypeptide: E3 SUMO-protein ligase EGR2 (476 aa).

Positions 127-141 are enriched in low complexity; sequence PASTTASSSVTSASP. Residues 127–178 form a disordered region; sequence PASTTASSSVTSASPNPLATGPLGVCTMSQTQPDLDHLYSPPPPPPPYSGCA. An HCFC1-binding-motif (HBM) motif is present at residues 162–165; sequence DHLY. Lysine 247 carries the post-translational modification N6-acetyllysine; by EP300. Disordered regions lie at residues 275-300 and 318-341; these read GPSA…SSSA and RPIL…RPYP. Residues 281-290 show a composition bias toward gly residues; that stretch reads TGPGASGGSE. 3 C2H2-type zinc fingers span residues 340 to 364, 370 to 392, and 398 to 420; these read YPCP…IRIH, FQCR…IRTH, and FACD…TKIH. Positions 412–476 are disordered; that stretch reads ERKRHTKIHL…APCSSRTRTP (65 aa). A compositionally biased stretch (basic residues) spans 415-425; sequence RHTKIHLRQKE. The span at 429–476 shows a compositional bias: low complexity; sequence SAPSASVPAPSTASCSGGVQPGGTLCSSNSSSLGGGPLAPCSSRTRTP.

Belongs to the EGR C2H2-type zinc-finger protein family. Interacts with HCFC1. Interacts with WWP2. Interacts with UBC9. Interacts with CITED1. Interacts (via phosphorylated form) with SFN. Post-translationally, ubiquitinated by WWP2 leading to proteasomal degradation. Acetylated at Lys-247. May be deacetylated by HDAC6, HDAC10 or SIRT1.

The protein resides in the nucleus. It functions in the pathway protein modification; protein sumoylation. Functionally, sequence-specific DNA-binding transcription factor. Plays a role in hindbrain segmentation by regulating the expression of a subset of homeobox containing genes and in Schwann cell myelination by regulating the expression of genes involved in the formation and maintenance of myelin. Binds to two EGR2-consensus sites EGR2A (5'-CTGTAGGAG-3') and EGR2B (5'-ATGTAGGTG-3') in the HOXB3 enhancer and promotes HOXB3 transcriptional activation. Binds to specific DNA sites located in the promoter region of HOXA4, HOXB2 and ERBB2. Regulates hindbrain segmentation by controlling the expression of Hox genes, such as HOXA4, HOXB3 and HOXB2, and thereby specifying odd and even rhombomeres. Promotes the expression of HOXB3 in the rhombomere r5 in the hindbrain. Regulates myelination in the peripheral nervous system after birth, possibly by regulating the expression of myelin proteins, such as MPZ, and by promoting the differentiation of Schwann cells. Involved in the development of the jaw openener musculature, probably by playing a role in its innervation through trigeminal motor neurons. May play a role in adipogenesis, possibly by regulating the expression of CEBPB. In terms of biological role, E3 SUMO-protein ligase helping SUMO1 conjugation to its coregulators NAB1 and NAB2, whose sumoylation down-regulates EGR2 transcriptional activity. This chain is E3 SUMO-protein ligase EGR2 (EGR2), found in Homo sapiens (Human).